Consider the following 421-residue polypeptide: Acetate kinase (421 aa).

N7 serves as a coordination point for Mg(2+). K14 is an ATP binding site. Residue R91 coordinates substrate. D148 functions as the Proton donor/acceptor in the catalytic mechanism. Residues 208–212 and 283–285 contribute to the ATP site; these read HIGNG and DRR. A Mg(2+)-binding site is contributed by E387.

The protein belongs to the acetokinase family. Homodimer. It depends on Mg(2+) as a cofactor. Mn(2+) serves as cofactor.

The protein resides in the cytoplasm. The enzyme catalyses acetate + ATP = acetyl phosphate + ADP. It functions in the pathway metabolic intermediate biosynthesis; acetyl-CoA biosynthesis; acetyl-CoA from acetate: step 1/2. Catalyzes the formation of acetyl phosphate from acetate and ATP. Can also catalyze the reverse reaction. This chain is Acetate kinase, found in Geobacter sulfurreducens (strain ATCC 51573 / DSM 12127 / PCA).